Consider the following 101-residue polypeptide: MAGQKIRIRLKAYDHEAIDASARKIVETVTRTGARVVGPVPLPTEKNVYCVIRSPHKYKDSREHFEMRTHKRLIDILDPTPKTVDALMRIDLPASVDVNIQ.

This sequence belongs to the universal ribosomal protein uS10 family. In terms of assembly, part of the 30S ribosomal subunit.

Functionally, involved in the binding of tRNA to the ribosomes. This chain is Small ribosomal subunit protein uS10, found in Rhodococcus erythropolis (strain PR4 / NBRC 100887).